The following is a 196-amino-acid chain: Rho-related GTP-binding protein RhoB (196 aa).

12-19 (GDGACGKT) serves as a coordination point for GTP. O-linked (GlcNAc) tyrosine; by Photorhabdus PAU_02230 glycosylation is present at Y34. The Effector region motif lies at 34-42 (YVPTVFENY). The (Microbial infection) O-linked (Glc) threonine; by C.difficile toxins TcdA and TcdB glycan is linked to T37. The residue at position 41 (N41) is an ADP-ribosylasparagine; by botulinum toxin. Residues 59–63 (DTAGQ) and 117–120 (NKKD) contribute to the GTP site. Y154 is modified (phosphotyrosine). 2 S-palmitoyl cysteine lipidation sites follow: C189 and C192. The residue at position 193 (C193) is a Cysteine methyl ester. C193 carries S-farnesyl cysteine; in plasma membrane form lipidation. Residue C193 is the site of S-geranylgeranyl cysteine; in endosomal form attachment. The propeptide at 194–196 (KVL) is removed in mature form.

It belongs to the small GTPase superfamily. Rho family. As to quaternary structure, binds ROCK1 and ROCK2. Also binds PKN1/PRK1. Interacts with ARGGEF3. Interacts with RTKN. Interacts with AKAP13. Interacts with RIPOR1. Post-translationally, prenylation specifies the subcellular location of RHOB. The farnesylated form is localized to the plasma membrane while the geranylgeranylated form is localized to the endosome. In terms of processing, (Microbial infection) Glycosylated at Tyr-34 by Photorhabdus asymbiotica toxin PAU_02230. Mono-O-GlcNAcylation by PAU_02230 inhibits downstream signaling by an impaired interaction with diverse regulator and effector proteins of Rho and leads to actin disassembly. (Microbial infection) Glucosylated at Thr-37 by C.difficile toxins TcdA and TcdB in the colonic epithelium. Monoglucosylation completely prevents the recognition of the downstream effector, blocking the GTPases in their inactive form, leading to actin cytoskeleton disruption.

The protein resides in the late endosome membrane. It is found in the cell membrane. The protein localises to the nucleus. Its subcellular location is the cleavage furrow. Mediates apoptosis in neoplastically transformed cells after DNA damage. Not essential for development but affects cell adhesion and growth factor signaling in transformed cells. Plays a negative role in tumorigenesis as deletion causes tumor formation. Involved in intracellular protein trafficking of a number of proteins. Targets PKN1 to endosomes and is involved in trafficking of the EGF receptor from late endosomes to lysosomes. Also required for stability and nuclear trafficking of AKT1/AKT which promotes endothelial cell survival during vascular development. Serves as a microtubule-dependent signal that is required for the myosin contractile ring formation during cell cycle cytokinesis. Required for genotoxic stress-induced cell death in breast cancer cells. This Homo sapiens (Human) protein is Rho-related GTP-binding protein RhoB (RHOB).